The chain runs to 341 residues: MATIKDVAKRANVSTTTVSHVINKTRFVAEETRNAVWAAIKELHYSPSAVARSLKVNHTKSIGLLATSSEAAYFAEIIEAVEKNCFQKGYTLILGNAWNNLEKQRAYLSMMAQKRVDGLLVMCSEYPEPLLSMLEEYRHIPMVVMDWGEAKADFTDTVIDNAFAGGYMAGRYLVERGHRDIGVIPGPLERNTGAGRLAGFMKAMEEALINVPDNWIVQGDFEPESGYHAMQQILSQSHRPTAVFCGGDIMAMGALCAADEMGLRVPQDVSVIGYDNVRNARYFTPALTTIHQPKDSLGETAFNMLLDRIVNKREESQSIEVHPRLVERRSVADGPFRDYRR.

In terms of domain architecture, HTH lacI-type spans 2–56 (ATIKDVAKRANVSTTTVSHVINKTRFVAEETRNAVWAAIKELHYSPSAVARSLKV). The H-T-H motif DNA-binding region spans 4–23 (IKDVAKRANVSTTTVSHVIN). The DNA-binding element occupies 48-56 (SAVARSLKV). Hypoxanthine contacts are provided by tyrosine 73, arginine 190, threonine 192, phenylalanine 221, and aspartate 275.

Homodimer.

It functions in the pathway purine metabolism; purine nucleotide biosynthesis [regulation]. In terms of biological role, is the main repressor of the genes involved in the de novo synthesis of purine nucleotides, regulating purB, purC, purEK, purF, purHD, purL, purMN and guaBA expression. PurR is allosterically activated to bind its cognate DNA by binding the purine corepressors, hypoxanthine or guanine, thereby effecting transcription repression. This chain is HTH-type transcriptional repressor PurR, found in Salmonella typhimurium (strain LT2 / SGSC1412 / ATCC 700720).